A 252-amino-acid chain; its full sequence is MLTKRIIPCLDVTAGRVVKGVNFVGLRDAGDPVEIARRYDSQGADELTFLDITATSDGRDLILHIIENVASQVFIPLTVGGGVRAVADVRRLLNAGADKVSMNSSAVANPDLVSDAAAYYGSQCIVVAIDAKQTEAGNWEVFTHGGRTATGMDVVEWAKEVAKRGAGEILLTSMNRDGSKDGFDLALTAAVSDAVSVPVIASGGVGNLQHLVDGITKGHADAVLAASIFHYGEYTVQEAKEYMAAQGVPVRI.

Residues Asp11 and Asp130 contribute to the active site.

It belongs to the HisA/HisF family. In terms of assembly, heterodimer of HisH and HisF.

The protein localises to the cytoplasm. It carries out the reaction 5-[(5-phospho-1-deoxy-D-ribulos-1-ylimino)methylamino]-1-(5-phospho-beta-D-ribosyl)imidazole-4-carboxamide + L-glutamine = D-erythro-1-(imidazol-4-yl)glycerol 3-phosphate + 5-amino-1-(5-phospho-beta-D-ribosyl)imidazole-4-carboxamide + L-glutamate + H(+). Its pathway is amino-acid biosynthesis; L-histidine biosynthesis; L-histidine from 5-phospho-alpha-D-ribose 1-diphosphate: step 5/9. Functionally, IGPS catalyzes the conversion of PRFAR and glutamine to IGP, AICAR and glutamate. The HisF subunit catalyzes the cyclization activity that produces IGP and AICAR from PRFAR using the ammonia provided by the HisH subunit. The polypeptide is Imidazole glycerol phosphate synthase subunit HisF (Polynucleobacter asymbioticus (strain DSM 18221 / CIP 109841 / QLW-P1DMWA-1) (Polynucleobacter necessarius subsp. asymbioticus)).